We begin with the raw amino-acid sequence, 505 residues long: AMP phosphorylase (505 aa).

Residues Gly-170, 196–201 (SRAITS), and Thr-205 each bind AMP. Catalysis depends on Asp-258, which acts as the Proton donor. Residues Ser-266 and Lys-290 each contribute to the AMP site.

It belongs to the thymidine/pyrimidine-nucleoside phosphorylase family. Type 2 subfamily.

The enzyme catalyses AMP + phosphate = alpha-D-ribose 1,5-bisphosphate + adenine. It catalyses the reaction CMP + phosphate = cytosine + alpha-D-ribose 1,5-bisphosphate. It carries out the reaction UMP + phosphate = alpha-D-ribose 1,5-bisphosphate + uracil. Catalyzes the conversion of AMP and phosphate to adenine and ribose 1,5-bisphosphate (R15P). Exhibits phosphorylase activity toward CMP and UMP in addition to AMP. Functions in an archaeal AMP degradation pathway, together with R15P isomerase and RubisCO. In Methanococcus maripaludis (strain C7 / ATCC BAA-1331), this protein is AMP phosphorylase.